The chain runs to 571 residues: MRTSNYLLSTLKETPNDAEVISHQLMLRAGMIRKLASGLYTWLPTGLRVLRKVENIVRQEIDNAGAVEILMPVVQPFELWEETGRSEKMGPELLRFTDRHSRPFVLSPTAEEVVTSLVRNEISSYKQLPLNLYQIQTKFRDERRPRFGVMRAREFSMMDAYSFDIDKEGLEKSYQAMHDAYCKAFDRMGLEYRPVLADSGAIGGSGSQEFHVLAESGEDLIAFSSDSDYAANIEKAEALAPTAELAAATQEMELVDTPNAKTIAELVEQHGLAIEKTVKTLFVKASDEIDADIVALIIRGDHELNEVKAENLPQVASPLEMAEEAEIRALIGAGPGSLGPVGLELPFIVDRTVAIMSDFGAGANVDGKHYFGINWGRDVELAQVEDLRNVVEGDLSPCGQGTIQLKRGIEVGHIFQLGTNYSKKMNCNVLGPDGKSATLEMGCYGIGVSRIVASAIEQNNDENGIIWPTALAPFQVAIVPMNMAKSEEVKAAAESLYAELTAAGIEVLFDDRKERPGVMFKDIELIGIPHTIVIGNRSLENGEMEYKDRRDGNKVAVPVADVVEMIKQKLA.

Belongs to the class-II aminoacyl-tRNA synthetase family. ProS type 1 subfamily. Homodimer.

It is found in the cytoplasm. The enzyme catalyses tRNA(Pro) + L-proline + ATP = L-prolyl-tRNA(Pro) + AMP + diphosphate. In terms of biological role, catalyzes the attachment of proline to tRNA(Pro) in a two-step reaction: proline is first activated by ATP to form Pro-AMP and then transferred to the acceptor end of tRNA(Pro). As ProRS can inadvertently accommodate and process non-cognate amino acids such as alanine and cysteine, to avoid such errors it has two additional distinct editing activities against alanine. One activity is designated as 'pretransfer' editing and involves the tRNA(Pro)-independent hydrolysis of activated Ala-AMP. The other activity is designated 'posttransfer' editing and involves deacylation of mischarged Ala-tRNA(Pro). The misacylated Cys-tRNA(Pro) is not edited by ProRS. The sequence is that of Proline--tRNA ligase from Photobacterium profundum (strain SS9).